Reading from the N-terminus, the 230-residue chain is ATP synthase subunit a (230 aa).

Helical transmembrane passes span 26–46, 83–103, 112–132, 143–163, 182–202, and 203–223; these read ANAV…SLIA, FFPL…VGLI, NVNT…VVGI, FMGP…IGHL, LVLM…MMLM, and GVLV…IYIQ.

Belongs to the ATPase A chain family. In terms of assembly, F-type ATPases have 2 components, CF(1) - the catalytic core - and CF(0) - the membrane proton channel. CF(1) has five subunits: alpha(3), beta(3), gamma(1), delta(1), epsilon(1). CF(0) has three main subunits: a(1), b(2) and c(9-12). The alpha and beta chains form an alternating ring which encloses part of the gamma chain. CF(1) is attached to CF(0) by a central stalk formed by the gamma and epsilon chains, while a peripheral stalk is formed by the delta and b chains.

Its subcellular location is the cell inner membrane. Its function is as follows. Key component of the proton channel; it plays a direct role in the translocation of protons across the membrane. This Trichlorobacter lovleyi (strain ATCC BAA-1151 / DSM 17278 / SZ) (Geobacter lovleyi) protein is ATP synthase subunit a.